The sequence spans 351 residues: MAPVLPLVLPLQPRIRLAQGLWLLSWLLALAGGVILLCSGHLLVQLRHLGTFLAPSCQFPVLPQAALAAGAVALGTGLVGVGASRASLNAALYPPWRGVLGPLLVAGTAGGGGLLVVGLGLALALPGSLDEALEEGLVTALAHYKDTEVPGHCQAKRLVDELQLRYHCCGRHGYKDWFGVQWVSSRYLDPGDRDVADRIQSNVEGLYLTDGVPFSCCNPHSPRPCLQNRLSDSYAHPLFDPRQPNQNLWAQGCHEVLLEHLQDLAGTLGSMLAVTFLLQALVLLGLRYLQTALEGLGGVIDAGGETQGYLFPSGLKDMLKTAWLQGGVACRPAPEEAPPGEAPPKEDLSEA.

The Cytoplasmic portion of the chain corresponds to 1 to 19 (MAPVLPLVLPLQPRIRLAQ). A helical membrane pass occupies residues 20-44 (GLWLLSWLLALAGGVILLCSGHLLV). Residues 45-64 (QLRHLGTFLAPSCQFPVLPQ) are Lumenal-facing. Residues 65 to 84 (AALAAGAVALGTGLVGVGAS) form a helical membrane-spanning segment. At 85-102 (RASLNAALYPPWRGVLGP) the chain is on the cytoplasmic side. The chain crosses the membrane as a helical span at residues 103–125 (LLVAGTAGGGGLLVVGLGLALAL). Topologically, residues 126 to 263 (PGSLDEALEE…HEVLLEHLQD (138 aa)) are lumenal. Residues 264–286 (LAGTLGSMLAVTFLLQALVLLGL) traverse the membrane as a helical segment. Over 287 to 351 (RYLQTALEGL…APPKEDLSEA (65 aa)) the chain is Cytoplasmic. The interval 331-351 (RPAPEEAPPGEAPPKEDLSEA) is disordered.

This sequence belongs to the PRPH2/ROM1 family. As to quaternary structure, homodimer; disulfide-linked. Forms a homotetramer. Forms a heterotetramer with PRPH2. Homotetramer and heterotetramer core complexes go on to form higher order complexes by formation of intermolecular disulfide bonds. Interacts with STX3. Interacts with SNAP25. In terms of tissue distribution, retina photoreceptors (at protein level). In rim region of ROS disks.

It is found in the photoreceptor inner segment membrane. The protein localises to the photoreceptor outer segment membrane. Its function is as follows. Plays a role in rod outer segment (ROS) morphogenesis. May play a role with PRPH2 in the maintenance of the structure of ROS curved disks. Plays a role in the organization of the ROS and maintenance of ROS disk diameter. Involved in the maintenance of the retina outer nuclear layer. This is Rod outer segment membrane protein 1 (ROM1) from Homo sapiens (Human).